The primary structure comprises 232 residues: Large ribosomal subunit protein uL1 (232 aa).

It belongs to the universal ribosomal protein uL1 family. Part of the 50S ribosomal subunit.

Binds directly to 23S rRNA. The L1 stalk is quite mobile in the ribosome, and is involved in E site tRNA release. In terms of biological role, protein L1 is also a translational repressor protein, it controls the translation of the L11 operon by binding to its mRNA. This chain is Large ribosomal subunit protein uL1, found in Colwellia psychrerythraea (strain 34H / ATCC BAA-681) (Vibrio psychroerythus).